A 300-amino-acid polypeptide reads, in one-letter code: Probable acetyltransferase Rv3034c (300 aa).

The first 25 residues, methionine 1–alanine 25, serve as a signal peptide directing secretion.

It belongs to the transferase hexapeptide repeat family.

May be involved in the biosynthesis of 6-O-methylglucosyl-containing lipopolysaccharides (MGLP). Its function is as follows. Regulates host peroxisome homeostasis in response to intracellular redox levels to favor mycobacterial infection in macrophage. Induces the expression of host peroxisome biogenesis and proliferation factors as well as peroxisome associated enzymes. Inhibits the induction of host pexophagy mechanism by down-regulating the expression of pexophagy associated proteins and adapter molecules in infected macrophages. However, during increased oxidative stress conditions, it induces degradation of dysfunctional and damaged peroxisomes. Regulation of peroxisome biogenesis and degradation is dependent upon host p-mTORC1 mediated signaling pathway. The protein is Probable acetyltransferase Rv3034c of Mycobacterium tuberculosis (strain ATCC 25618 / H37Rv).